The following is a 356-amino-acid chain: MNAARTGYRVFSANSTAACTELAKRITERLGAELGKSVVYQETNGETRVEIKESVRGQDIFIIQTIPRDVNTAVMELLIMAYALKTACARNIIGVIPYFPYSKQSKMRKRGSIVCKLLASMLAKAGLTHIITMDLHQKEIQGFFCFPVDNLRASPFLLQYIQEEIPNYRNAVIVAKSPDAAKRAQSYAERLRLGLAVIHGEAQCTELDMDDGRHSPPMVKNATVHPGLELPLMMAKEKPPITVVGDVGGRIAIIVDDIIDDVESFVAAAETLKERGAYKIYVMATHGILSAEAPRLIEESPIDEVVVTNTVPHELQKLQCPKIKTVDISLILSEAIRRIHNGESMAYLFRNITVDD.

The residue at position 1 (M1) is an N-acetylmethionine. Residues S177 and S215 each carry the phosphoserine modification.

This sequence belongs to the ribose-phosphate pyrophosphokinase family. As to quaternary structure, binds to PRPS1 and PRPS2. Ubiquitous.

In terms of biological role, seems to play a negative regulatory role in 5-phosphoribose 1-diphosphate synthesis. The polypeptide is Phosphoribosyl pyrophosphate synthase-associated protein 1 (Prpsap1) (Rattus norvegicus (Rat)).